The following is a 217-amino-acid chain: Large ribosomal subunit protein uL3 (217 aa).

The interval 127–162 (GFSRGPMSHGSKNHRAPGSTGAGTTPGRIYPGKRMA) is disordered. The segment covering 142-153 (APGSTGAGTTPG) has biased composition (low complexity).

This sequence belongs to the universal ribosomal protein uL3 family. As to quaternary structure, part of the 50S ribosomal subunit. Forms a cluster with proteins L14 and L19.

In terms of biological role, one of the primary rRNA binding proteins, it binds directly near the 3'-end of the 23S rRNA, where it nucleates assembly of the 50S subunit. The polypeptide is Large ribosomal subunit protein uL3 (Prochlorococcus marinus (strain MIT 9301)).